Reading from the N-terminus, the 404-residue chain is Cysteine desulfurase IscS (404 aa).

Pyridoxal 5'-phosphate is bound by residues 75 to 76 (AT), Asn155, Gln183, and 203 to 205 (SGH). Lys206 is modified (N6-(pyridoxal phosphate)lysine). Residue Thr243 coordinates pyridoxal 5'-phosphate. The active-site Cysteine persulfide intermediate is Cys328. Cys328 is a binding site for [2Fe-2S] cluster.

It belongs to the class-V pyridoxal-phosphate-dependent aminotransferase family. NifS/IscS subfamily. As to quaternary structure, homodimer. Forms a heterotetramer with IscU, interacts with other sulfur acceptors. Requires pyridoxal 5'-phosphate as cofactor.

The protein resides in the cytoplasm. It catalyses the reaction (sulfur carrier)-H + L-cysteine = (sulfur carrier)-SH + L-alanine. Its pathway is cofactor biosynthesis; iron-sulfur cluster biosynthesis. Its function is as follows. Master enzyme that delivers sulfur to a number of partners involved in Fe-S cluster assembly, tRNA modification or cofactor biosynthesis. Catalyzes the removal of elemental sulfur atoms from cysteine to produce alanine. Functions as a sulfur delivery protein for Fe-S cluster synthesis onto IscU, an Fe-S scaffold assembly protein, as well as other S acceptor proteins. The polypeptide is Cysteine desulfurase IscS (Shewanella denitrificans (strain OS217 / ATCC BAA-1090 / DSM 15013)).